The chain runs to 56 residues: Large ribosomal subunit protein bL32c (56 aa).

Over residues 1–20 (MAAPKKRTSKSRKNMRKSTW) the composition is skewed to basic residues. The interval 1–28 (MAAPKKRTSKSRKNMRKSTWKRQAATQA) is disordered.

Belongs to the bacterial ribosomal protein bL32 family.

It is found in the plastid. The protein localises to the chloroplast. The polypeptide is Large ribosomal subunit protein bL32c (rpl32) (Mesostigma viride (Green alga)).